Reading from the N-terminus, the 254-residue chain is Rho-related protein racD (254 aa).

GTP is bound at residue G15–T22. Positions Y37–F45 match the Effector region motif. GTP-binding positions include D62–Q66 and T120–D123. The span at A186–P231 shows a compositional bias: low complexity. A disordered region spans residues A186–K254. Basic and acidic residues predominate over residues A232 to K254.

The protein belongs to the small GTPase superfamily. Rho family.

This is Rho-related protein racD (racD) from Dictyostelium discoideum (Social amoeba).